The primary structure comprises 569 residues: Santalene synthase (569 aa).

Residues Arg-284, Asp-321, Asp-325, and Arg-460 each contribute to the (2E)-geranyl diphosphate site. Mg(2+)-binding residues include Asp-321 and Asp-325. The short motif at 321–325 is the DDXXD motif element; it reads DDGYD. Mg(2+) contacts are provided by Asn-463, Thr-467, and Glu-471.

Belongs to the terpene synthase family. Tpsb subfamily. Mg(2+) serves as cofactor. Mn(2+) is required as a cofactor.

The catalysed reaction is (2E,6E)-farnesyl diphosphate = (1S,5S,6R)-alpha-bergamotene + diphosphate. It carries out the reaction (2E,6E)-farnesyl diphosphate = (+)-alpha-santalene + diphosphate. The enzyme catalyses (2E,6E)-farnesyl diphosphate = (-)-beta-santalene + diphosphate. Functionally, catalyzes a mixture of sesquiterpenoids from (2E,6E)-farnesyl diphosphate in fragrance biosynthesis. Catalyzes the formation of alpha-santalene, beta-santalene, epi-beta-santalene and exo-alpha-bergamotene, as well as traces of alpha-farnesene and beta-farnesene. Also acts with (Z,Z)-farnesyl diphosphate isomer, producing alpha-endo-bergamotene, alpha-santalene, (Z)-beta-farnesene, epi-beta-santalene, and beta-santalene. In Santalum album (White sandalwood), this protein is Santalene synthase.